The sequence spans 945 residues: Leucine--tRNA ligase (945 aa).

The short motif at 43 to 53 (PYPNGAIHIGH) is the 'HIGH' region element. Positions 638–642 (KMSKS) match the 'KMSKS' region motif. Lys641 serves as a coordination point for ATP.

Belongs to the class-I aminoacyl-tRNA synthetase family.

The protein resides in the cytoplasm. The enzyme catalyses tRNA(Leu) + L-leucine + ATP = L-leucyl-tRNA(Leu) + AMP + diphosphate. The sequence is that of Leucine--tRNA ligase from Pyrobaculum neutrophilum (strain DSM 2338 / JCM 9278 / NBRC 100436 / V24Sta) (Thermoproteus neutrophilus).